The chain runs to 336 residues: Cytoskeleton protein RodZ (336 aa).

Residues 1–111 are Cytoplasmic-facing; it reads MNTEATHDQN…LGKRRKKRDG (111 aa). Residues 19-71 form the HTH cro/C1-type domain; that stretch reads LRNAREQLGLSQQAVAERLCLKVSTVRDIEEDKAPADLASTFLRGYIRSYARL. Positions 30–49 form a DNA-binding region, H-T-H motif; sequence QQAVAERLCLKVSTVRDIEE. Residues 112-132 form a helical; Signal-anchor for type II membrane protein membrane-spanning segment; that stretch reads WLMTFTWLVLFVVIGLSGAWW. The Periplasmic portion of the chain corresponds to 133–336; that stretch reads WQDHKAQQEE…TLNAEQSPAQ (204 aa). Residues 148–164 are compositionally biased toward polar residues; the sequence is DQSSAELNNNQSQSVPL. Positions 148–245 are disordered; that stretch reads DQSSAELNNN…PLPTDQAGVT (98 aa). The segment covering 165–201 has biased composition (low complexity); sequence DTSTTTDQAMATTPTSPVDTTATNTQTPAATTAPSPT. A compositionally biased stretch (polar residues) spans 202 to 217; it reads VDSQQNAVVPPSQANV. Low complexity predominate over residues 218 to 240; it reads DTAATPAPAATTTPDGAAPLPTD.

It belongs to the RodZ family.

The protein localises to the cell inner membrane. In terms of biological role, cytoskeletal protein that is involved in cell-shape control through regulation of the length of the long axis. The polypeptide is Cytoskeleton protein RodZ (Escherichia coli O7:K1 (strain IAI39 / ExPEC)).